The primary structure comprises 339 residues: Glyceraldehyde-3-phosphate dehydrogenase (339 aa).

Residues 12 to 13 (RI), aspartate 39, arginine 84, and serine 127 contribute to the NAD(+) site. D-glyceraldehyde 3-phosphate-binding positions include 157 to 159 (SCT), threonine 188, arginine 203, 216 to 217 (TG), and arginine 239. Cysteine 158 (nucleophile) is an active-site residue. Asparagine 320 provides a ligand contact to NAD(+).

The protein belongs to the glyceraldehyde-3-phosphate dehydrogenase family. As to quaternary structure, homotetramer.

It localises to the cytoplasm. The catalysed reaction is D-glyceraldehyde 3-phosphate + phosphate + NAD(+) = (2R)-3-phospho-glyceroyl phosphate + NADH + H(+). Its pathway is carbohydrate degradation; glycolysis; pyruvate from D-glyceraldehyde 3-phosphate: step 1/5. Its function is as follows. Catalyzes the oxidative phosphorylation of glyceraldehyde 3-phosphate (G3P) to 1,3-bisphosphoglycerate (BPG) using the cofactor NAD. The first reaction step involves the formation of a hemiacetal intermediate between G3P and a cysteine residue, and this hemiacetal intermediate is then oxidized to a thioester, with concomitant reduction of NAD to NADH. The reduced NADH is then exchanged with the second NAD, and the thioester is attacked by a nucleophilic inorganic phosphate to produce BPG. The protein is Glyceraldehyde-3-phosphate dehydrogenase (gap) of Mycobacterium bovis (strain ATCC BAA-935 / AF2122/97).